Reading from the N-terminus, the 210-residue chain is Protein-L-isoaspartate O-methyltransferase (210 aa).

Ser59 is a catalytic residue.

It belongs to the methyltransferase superfamily. L-isoaspartyl/D-aspartyl protein methyltransferase family.

Its subcellular location is the cytoplasm. The enzyme catalyses [protein]-L-isoaspartate + S-adenosyl-L-methionine = [protein]-L-isoaspartate alpha-methyl ester + S-adenosyl-L-homocysteine. Catalyzes the methyl esterification of L-isoaspartyl residues in peptides and proteins that result from spontaneous decomposition of normal L-aspartyl and L-asparaginyl residues. It plays a role in the repair and/or degradation of damaged proteins. The protein is Protein-L-isoaspartate O-methyltransferase of Nitratidesulfovibrio vulgaris (strain ATCC 29579 / DSM 644 / CCUG 34227 / NCIMB 8303 / VKM B-1760 / Hildenborough) (Desulfovibrio vulgaris).